The sequence spans 385 residues: Outer membrane protein P2 (385 aa).

The first 20 residues, 1–20 (MKKTLAALIVGAFAASAANA), serve as a signal peptide directing secretion.

Belongs to the Gram-negative porin family. In terms of assembly, homotrimer.

The protein resides in the cell outer membrane. Its function is as follows. Forms pores that allow passive diffusion of small molecules across the outer membrane. This chain is Outer membrane protein P2 (ompP2), found in Haemophilus influenzae.